Consider the following 166-residue polypeptide: Ribosome maturation factor RimM (166 aa).

One can recognise a PRC barrel domain in the interval 91–163 (DDGFYDHELE…TCVITPPEGL (73 aa)).

It belongs to the RimM family. As to quaternary structure, binds ribosomal protein uS19.

The protein resides in the cytoplasm. Its function is as follows. An accessory protein needed during the final step in the assembly of 30S ribosomal subunit, possibly for assembly of the head region. Essential for efficient processing of 16S rRNA. May be needed both before and after RbfA during the maturation of 16S rRNA. It has affinity for free ribosomal 30S subunits but not for 70S ribosomes. In Corynebacterium diphtheriae (strain ATCC 700971 / NCTC 13129 / Biotype gravis), this protein is Ribosome maturation factor RimM.